The primary structure comprises 75 residues: MTVIRLTRIGRKKKPFYRVVVTDSRKRRDGGWIESIGYYNPLEPKDIKIDKERLNYWKGVGAKMSERVEKLSQKA.

Belongs to the bacterial ribosomal protein bS16 family.

The chain is Small ribosomal subunit protein bS16 from Helicobacter pylori (strain G27).